The chain runs to 178 residues: MNATPAVADDLIVIGKIYSVHGVRGEVKVYSFTDPTENLLQYKTWTLKREGSVKQVELVSGRGSDKFLVAKLKGLDDREEARLLAGYEICVPRNLFPELTDGEYYWYQLEGLKVIDQLGQLFGKIDHLLETGANDVMVVKPCAGSLDDRERLLPYTKQCVLAVDLEAGEMKVEWDADF.

The PRC barrel domain maps to 100 to 178; that stretch reads TDGEYYWYQL…EMKVEWDADF (79 aa).

This sequence belongs to the RimM family. As to quaternary structure, binds ribosomal protein uS19.

The protein localises to the cytoplasm. Its function is as follows. An accessory protein needed during the final step in the assembly of 30S ribosomal subunit, possibly for assembly of the head region. Essential for efficient processing of 16S rRNA. May be needed both before and after RbfA during the maturation of 16S rRNA. It has affinity for free ribosomal 30S subunits but not for 70S ribosomes. The sequence is that of Ribosome maturation factor RimM from Pseudomonas fluorescens (strain SBW25).